Reading from the N-terminus, the 129-residue chain is MAKEATRVRRRERKNIASGVAHVNSSFNNTTITITDAQGNTIAWSSAGTMGFKGSRKSTPYAAQVAAEDVSKKAQEHGMRTLEVEVAGPGSGRESALRALQAAGFTVTSIRDVTTIPHNGCRPRKRRRV.

Belongs to the universal ribosomal protein uS11 family. In terms of assembly, part of the 30S ribosomal subunit. Interacts with proteins S7 and S18. Binds to IF-3.

In terms of biological role, located on the platform of the 30S subunit, it bridges several disparate RNA helices of the 16S rRNA. Forms part of the Shine-Dalgarno cleft in the 70S ribosome. This Bradyrhizobium sp. (strain BTAi1 / ATCC BAA-1182) protein is Small ribosomal subunit protein uS11.